The primary structure comprises 397 residues: Phosphoglycerate kinase (397 aa).

Substrate-binding positions include 26 to 28 (DLN), Arg42, 65 to 68 (HLGR), Arg119, and Arg152. Residues Lys203, Glu325, and 351–354 (GGDT) each bind ATP.

Belongs to the phosphoglycerate kinase family. Monomer.

Its subcellular location is the cytoplasm. The enzyme catalyses (2R)-3-phosphoglycerate + ATP = (2R)-3-phospho-glyceroyl phosphate + ADP. It participates in carbohydrate degradation; glycolysis; pyruvate from D-glyceraldehyde 3-phosphate: step 2/5. This chain is Phosphoglycerate kinase, found in Bordetella bronchiseptica (strain ATCC BAA-588 / NCTC 13252 / RB50) (Alcaligenes bronchisepticus).